Reading from the N-terminus, the 205-residue chain is MALQLSREQGITLRGSAEIVAEFFSFGINSILYQRGIYPSETFTRVQKYGLTLLVTTDLELIKYLNNVVEQLKDWLYKCSVQKLVVVISNIESGEVLERWQFDIECDKTAKDDSAPREKSQKAIQDEIRSVIRQITATVTFLPLLEVSCSFDLLIYTDKDLVVPEKWEESGPQFITNSEEVRLRSFTTTIHKVNSMVAYKIPVND.

Alanine 2 bears the N-acetylalanine mark. Serine 6, serine 130, serine 170, serine 178, serine 185, and serine 195 each carry phosphoserine. The HORMA domain occupies 14–197 (RGSAEIVAEF…TTIHKVNSMV (184 aa)). A required for assuming the closed conformation and for interaction with CDC20 region spans residues 195 to 205 (SMVAYKIPVND).

Belongs to the MAD2 family. As to quaternary structure, monomer and homodimer. Heterodimerizes with MAD2L1 in order to form a tetrameric MAD1L1-MAD2L1 core complex. In the closed and open conformation, interacts with MAD1L1. Formation of a heterotetrameric core complex containing two molecules each of MAD1L1 and of MAD2L1 promotes binding of another molecule of MAD2L1 to each MAD2L1, resulting in a heterohexamer. Interacts with MAD2L1BP. Interacts with ADAM17/TACE. Interacts with CDC20. Dimeric MAD2L1 in the closed conformation interacts with CDC20. Monomeric MAD2L1 in the open conformation does not interact with CDC20. CDC20 competes with MAD1L1 for MAD2L1 binding. In the closed conformation, interacts with BUB1B. Interacts with TTK. Interacts with TPR. Binds to UBD (via ubiquitin-like 1 domain) during mitosis. Interacts with isoform 1 and isoform 2 of NEK2. Interacts with HSF1; this interaction occurs in mitosis. Interacts with isoform 3 of MAD1L1; this interaction leads to the cytoplasmic sequestration of MAD2L1. Phosphorylated on multiple serine residues. The level of phosphorylation varies during the cell cycle and is highest during mitosis. Phosphorylation abolishes interaction with MAD1L1 and reduces interaction with CDC20. Phosphorylated by NEK2.

The protein localises to the nucleus. It is found in the chromosome. The protein resides in the centromere. It localises to the kinetochore. Its subcellular location is the cytoplasm. The protein localises to the cytoskeleton. It is found in the spindle pole. Component of the spindle-assembly checkpoint that prevents the onset of anaphase until all chromosomes are properly aligned at the metaphase plate. In the closed conformation (C-MAD2) forms a heterotetrameric complex with MAD1L1 at unattached kinetochores during prometaphase, the complex recruits open conformation molecules of MAD2L1 (O-MAD2) and then promotes the conversion of O-MAD2 to C-MAD2. Required for the execution of the mitotic checkpoint which monitors the process of kinetochore-spindle attachment and inhibits the activity of the anaphase promoting complex by sequestering CDC20 until all chromosomes are aligned at the metaphase plate. The sequence is that of Mitotic spindle assembly checkpoint protein MAD2A (MAD2L1) from Homo sapiens (Human).